Reading from the N-terminus, the 277-residue chain is Inositol monophosphatase 1 (277 aa).

Residues Glu-70, Asp-90, Ile-92, and Asp-93 each contribute to the Mg(2+) site. Residues Glu-70, 90–95, 194–196, Glu-213, and Asp-220 contribute to the substrate site; these read DPIDGT and GTA. Mg(2+) is bound at residue Asp-220.

It belongs to the inositol monophosphatase superfamily. In terms of assembly, homodimer. Mg(2+) is required as a cofactor. Mostly expressed in brain, small intestine, testis, kidney, and spleen (at protein level).

The protein resides in the cytoplasm. The enzyme catalyses a myo-inositol phosphate + H2O = myo-inositol + phosphate. It carries out the reaction 1D-myo-inositol 1-phosphate + H2O = myo-inositol + phosphate. It catalyses the reaction 1D-myo-inositol 2-phosphate + H2O = myo-inositol + phosphate. The catalysed reaction is 1D-myo-inositol 3-phosphate + H2O = myo-inositol + phosphate. The enzyme catalyses 1D-myo-inositol 4-phosphate + H2O = myo-inositol + phosphate. It carries out the reaction 1D-myo-inositol 5-phosphate + H2O = myo-inositol + phosphate. It catalyses the reaction 1D-myo-inositol 6-phosphate + H2O = myo-inositol + phosphate. The catalysed reaction is scyllo-inositol 1-phosphate + H2O = scyllo-inositol + phosphate. The enzyme catalyses alpha-D-galactose 1-phosphate + H2O = D-galactose + phosphate. It carries out the reaction alpha-D-glucose 1-phosphate + H2O = D-glucose + phosphate. It catalyses the reaction D-glucose 6-phosphate + H2O = D-glucose + phosphate. The catalysed reaction is beta-D-fructose 1-phosphate + H2O = D-fructose + phosphate. The enzyme catalyses glycerol 2-phosphate + H2O = glycerol + phosphate. It carries out the reaction adenosine 2'-phosphate + H2O = adenosine + phosphate. The protein operates within polyol metabolism; myo-inositol biosynthesis; myo-inositol from D-glucose 6-phosphate: step 2/2. Its activity is regulated as follows. Inhibited by Li(+), Ca(2+) and Mn(2+), but also by Mg(2+) at concentrations above 3 mM. Its function is as follows. Phosphatase involved in the dephosphorylation of myo-inositol monophosphate to generate myo-inositol. Is also able to dephosphorylate scyllo-inositol-phosphate, myo-inositol 1,4-diphosphate, scyllo-inositol-1,3-diphosphate and scyllo-inositol-1,4-diphosphate. Also dephosphorylates in vitro other sugar-phosphates including D-galactose-1-phosphate, glucose-1-phosphate, glucose-6-phosphate, fructose-1-phosphate, beta-glycerophosphate and 2'-AMP. Responsible for the provision of inositol required for synthesis of phosphatidylinositol and polyphosphoinositides, and involved in maintaining normal brain function. Has been implicated as the pharmacological target for lithium Li(+) action in brain. The polypeptide is Inositol monophosphatase 1 (Impa1) (Mus musculus (Mouse)).